The sequence spans 155 residues: MIVYGVYNSPLGTITVAKNERGIIMLDFCDCAERNLVDNSTFTDLFHKFDNYFQGKPVEFNETVDLFVNNFRRRVFNEVRRIGWGKVKTYKEIAETLKTSPRAVGMALSKNPVLLIIPCHRIIAESGLGGFSRGIELKKKLLELEGVNIEALVRG.

The active-site Nucleophile; methyl group acceptor is Cys-119.

Belongs to the MGMT family.

It is found in the cytoplasm. The enzyme catalyses a 6-O-methyl-2'-deoxyguanosine in DNA + L-cysteinyl-[protein] = S-methyl-L-cysteinyl-[protein] + a 2'-deoxyguanosine in DNA. It catalyses the reaction a 4-O-methyl-thymidine in DNA + L-cysteinyl-[protein] = a thymidine in DNA + S-methyl-L-cysteinyl-[protein]. In terms of biological role, involved in the cellular defense against the biological effects of O6-methylguanine (O6-MeG) and O4-methylthymine (O4-MeT) in DNA. Repairs the methylated nucleobase in DNA by stoichiometrically transferring the methyl group to a cysteine residue in the enzyme. This is a suicide reaction: the enzyme is irreversibly inactivated. This is Methylated-DNA--protein-cysteine methyltransferase from Sulfolobus acidocaldarius (strain ATCC 33909 / DSM 639 / JCM 8929 / NBRC 15157 / NCIMB 11770).